The sequence spans 115 residues: uncharacterized protein (115 aa).

This is an uncharacterized protein from Acidianus sp. F28 (AFV-2).